A 218-amino-acid chain; its full sequence is Uridine kinase (218 aa).

ATP is bound at residue 16-23 (GGSGSGKT).

The protein belongs to the uridine kinase family.

The protein resides in the cytoplasm. It carries out the reaction uridine + ATP = UMP + ADP + H(+). It catalyses the reaction cytidine + ATP = CMP + ADP + H(+). Its pathway is pyrimidine metabolism; CTP biosynthesis via salvage pathway; CTP from cytidine: step 1/3. The protein operates within pyrimidine metabolism; UMP biosynthesis via salvage pathway; UMP from uridine: step 1/1. This Limosilactobacillus reuteri (strain DSM 20016) (Lactobacillus reuteri) protein is Uridine kinase.